A 572-amino-acid chain; its full sequence is MRNTVLNTLNAFPTQLGSNKSTLSSKIFHSYLGVLRPPTPLNTSMEVLGEGAHQNREAKRSSLRFEFCSALKECQKGKVPFGSSLRLEAAENLTFECETGNYHTFCPISCVRWLYQQIADSFFLVIGTKTCGYFLQNAMGVMIFAEPRYAMAELEEGDIAAQLNDYKELKRLCLQIKHDRNPSVIVWIGTCTTEIIKMDLENLAKLIEAELKVPIVVARANGLDYAFTQGEDTVLASLVNRCPSSHESSLDSMKLPSGGREKQINDVNTSKPEGYLSEVISLTSNGDDINKKSCTKPVPKKSLVLFGSVPNSVQTQLTLELAKQGINVDGWLPSRYSELPVLNKDVYVCGINPFLSRTATSLMRRRKCHLISAPFPIGPDGTRRWIEKICTVLNTDKSSTSLEEVQKNLQQREEKVWKSLQSYLDLVKKKSVFFMGDNLLEISLARFFIRCGMIVYEIGIPYMDRRYQAAELALLEQTCLEMNVPLPRIVEKPDNYNQIQRIRELQPDIVVTGLAHSNPLEARGVTTKWSTEFTFAQIHGFANSRDVLELITRPVRRNQNLDALGFTSLVKN.

3 residues coordinate [4Fe-4S] cluster: Cys106, Cys131, and Cys191. The interval 249–268 (SLDSMKLPSGGREKQINDVN) is disordered.

This sequence belongs to the BchN/ChlN family. In terms of assembly, protochlorophyllide reductase is composed of three subunits; ChlL, ChlN and ChlB. Forms a heterotetramer of two ChlB and two ChlN subunits. The cofactor is [4Fe-4S] cluster.

It is found in the plastid. The protein localises to the chloroplast. The catalysed reaction is chlorophyllide a + oxidized 2[4Fe-4S]-[ferredoxin] + 2 ADP + 2 phosphate = protochlorophyllide a + reduced 2[4Fe-4S]-[ferredoxin] + 2 ATP + 2 H2O. Its pathway is porphyrin-containing compound metabolism; chlorophyll biosynthesis (light-independent). Its function is as follows. Component of the dark-operative protochlorophyllide reductase (DPOR) that uses Mg-ATP and reduced ferredoxin to reduce ring D of protochlorophyllide (Pchlide) to form chlorophyllide a (Chlide). This reaction is light-independent. The NB-protein (ChlN-ChlB) is the catalytic component of the complex. The sequence is that of Light-independent protochlorophyllide reductase subunit N from Oltmannsiellopsis viridis (Marine flagellate).